Reading from the N-terminus, the 279-residue chain is Pantothenate synthetase (279 aa).

Residue Met-26–His-33 participates in ATP binding. The active-site Proton donor is the His-33. Gln-57 contributes to the (R)-pantoate binding site. Gln-57 provides a ligand contact to beta-alanine. ATP is bound at residue Gly-144–Asp-147. Position 150 (Gln-150) interacts with (R)-pantoate. ATP is bound by residues Val-173 and Leu-181–Arg-184.

Belongs to the pantothenate synthetase family. As to quaternary structure, homodimer.

Its subcellular location is the cytoplasm. The catalysed reaction is (R)-pantoate + beta-alanine + ATP = (R)-pantothenate + AMP + diphosphate + H(+). It participates in cofactor biosynthesis; (R)-pantothenate biosynthesis; (R)-pantothenate from (R)-pantoate and beta-alanine: step 1/1. In terms of biological role, catalyzes the condensation of pantoate with beta-alanine in an ATP-dependent reaction via a pantoyl-adenylate intermediate. The sequence is that of Pantothenate synthetase from Burkholderia ambifaria (strain ATCC BAA-244 / DSM 16087 / CCUG 44356 / LMG 19182 / AMMD) (Burkholderia cepacia (strain AMMD)).